A 444-amino-acid polypeptide reads, in one-letter code: Abhydrolase domain-containing protein abhd-5.2 (444 aa).

In terms of domain architecture, AB hydrolase-1 spans Pro-162–Asp-409.

Belongs to the peptidase S33 family. ABHD4/ABHD5 subfamily. As to quaternary structure, interacts with atgl-1; the interaction tethers atgl-1 to lipid droplets. As to expression, expressed in the hypodermis and intestine.

It is found in the lipid droplet. Functionally, acts coordinately with phospholipase atgl-1 within the lipolytic cascade to distribute stored energy to tissues to maintain energy levels during the dauer phase. Localizes atgl-1 to lipid droplets, possibly to facilitate triglyceride hydrolysis. Regulates lipid droplet size, lipid content, the exchange of lipids between lipid droplets and fusion of lipid droplets during the dauer phase. This is Abhydrolase domain-containing protein abhd-5.2 from Caenorhabditis elegans.